We begin with the raw amino-acid sequence, 253 residues long: uncharacterized protein (253 aa).

Belongs to the DcsA family.

This is an uncharacterized protein from Bacillus subtilis (strain 168).